Consider the following 593-residue polypeptide: Thiol:disulfide interchange protein DsbD (593 aa).

An N-terminal signal peptide occupies residues 1 to 21 (MRALLTFFVAGLLVLSSPAMA). 2 disulfides stabilise this stretch: cysteine 130–cysteine 136 and cysteine 207–cysteine 328. 8 helical membrane passes run 193-215 (LLFL…YPIL), 235-257 (LVYV…SAGL), 269-291 (LIGL…TLQL), 318-340 (GAIS…LLYV), 347-369 (LTGG…LVAV), 384-401 (RVKT…IFLL), 408-425 (MWST…FGWL), and 440-462 (SAVG…NYWF). The 143-residue stretch at 451 to 593 (FASAQPALNY…FLEHIQRISN (143 aa)) folds into the Thioredoxin domain. A disulfide bridge connects residues cysteine 508 and cysteine 511.

It belongs to the thioredoxin family. DsbD subfamily.

The protein resides in the cell inner membrane. It catalyses the reaction [protein]-dithiol + NAD(+) = [protein]-disulfide + NADH + H(+). The catalysed reaction is [protein]-dithiol + NADP(+) = [protein]-disulfide + NADPH + H(+). Its function is as follows. Required to facilitate the formation of correct disulfide bonds in some periplasmic proteins and for the assembly of the periplasmic c-type cytochromes. Acts by transferring electrons from cytoplasmic thioredoxin to the periplasm. This transfer involves a cascade of disulfide bond formation and reduction steps. The sequence is that of Thiol:disulfide interchange protein DsbD from Vibrio vulnificus (strain CMCP6).